The chain runs to 852 residues: MSSVSPIQIPSRLPLLLTHEGVLLPGSTMRTSVDSARNLQLVRSRLLKGTSLQSTILGVIPNTPDPASDAQDLPPLHRIGTAALAVQVVGSNWPKPHYTLLITGLCRFQITQVVREKPYPVAEVEQLDRLEEFPNTCKTREELGELSEQFYKYAVQLVEMLDMSVPAVAKLRRLLDSLPREALPDILTSIIRTSNKEKLQILDAVSLEERFKMTIPLLVRQIEGLKLLQKTRKHKQDDDKRVIAIRPMRRITHVPGALADEDEDEDNDDIVMLEKKIRTSSMPEQAHKVCVKEIKRLKKMPQSMPEYALTRNYLELMVELPWNKSTTDRLDIRAARVLLDNDHYAMEKLKKRVLEYLAVRQLKNNLKGPILCFVGPPGVGKTSVGRSVAKTLGREFHRIALGGVCDQSDIRGHRRTYVGSMPGRIINGLKTVGVNNPVFLLDEVDKLGKSLQGDPAAALLEVLDPEQNHNFTDHYLNVAFDLSQVLFIATANTTASIPPALLDRMEIIQVPGYTQEEKIEIAHRHLIPKQLEQHGLTPQQIQIPQVTTLDIITRYTREAGVRSLDRKLGAICRAVAVKVAEGQHREAKLDRPDVAEGEGCKEHLLEDGKSDPVSDTTDLALPPEMPILIDFHALKDILGPPMYEMEVSERLSQPGVAIGLAWTPLGGEIMFVEASRMDGEGQLTLTGQLGNVMKESAHLAISWLRSNAKKYHLTNASGSFDLLENTDIHLHFPAGAVTKDGPSAGVTIATCLASLFSGRLVRSDVAMTGEITLRGLVLPVGGIKDKALAAHRAGLKRVIIPQRNEKDLEEIPANVRQDLSFITASCLDEVLNAAFDGGFTVKARPGLLNSKL.

An N-acetylserine modification is found at Ser2. Residues 13-222 (LPLLLTHEGV…MTIPLLVRQI (210 aa)) enclose the Lon N-terminal domain. 375–382 (GPPGVGKT) is a binding site for ATP. Positions 651–837 (LSQPGVAIGL…DEVLNAAFDG (187 aa)) constitute a Lon proteolytic domain. Catalysis depends on residues Ser743 and Lys786. The Microbody targeting signal signature appears at 850–852 (SKL).

The protein belongs to the peptidase S16 family. Interacts with PEX5. Interacts with TYSND1. May interact with enzymes involved in beta-oxidation of fatty acids, including ACOX1/AOX.

The protein localises to the peroxisome matrix. It catalyses the reaction Hydrolysis of proteins in presence of ATP.. Functionally, ATP-dependent serine protease that mediates the selective degradation of misfolded and unassembled polypeptides in the peroxisomal matrix. Necessary for type 2 peroxisome targeting signal (PTS2)-containing protein processing and facilitates peroxisome matrix protein import. May indirectly regulate peroxisomal fatty acid beta-oxidation through degradation of the self-processed forms of TYSND1. This is Lon protease homolog 2, peroxisomal from Bos taurus (Bovine).